The sequence spans 907 residues: Translation initiation factor IF-2 (907 aa).

Residues 1–305 are disordered; that stretch reads MSEGNDQDQG…SLASVRRQRE (305 aa). Positions 62–80 are enriched in gly residues; the sequence is SGSGSSGGGRAGGRGGSGG. Composition is skewed to basic and acidic residues over residues 93–114 and 122–158; these read RVLE…EQEK and EEAR…ERRA. Low complexity predominate over residues 211–230; it reads PARPVTPSRPATPAATPQAP. 2 stretches are compositionally biased toward basic and acidic residues: residues 240–249 and 271–280; these read RVGEAEDDRR and KGGDSRRSGR. A tr-type G domain is found at 406-576; the sequence is PRPPVVTVMG…LLQAEMLDLR (171 aa). The segment at 415-422 is G1; that stretch reads GHVDHGKT. 415-422 contributes to the GTP binding site; it reads GHVDHGKT. The G2 stretch occupies residues 440-444; that stretch reads GITQH. The G3 stretch occupies residues 462–465; sequence DTPG. GTP is bound by residues 462-466 and 516-519; these read DTPGH and NKCD. The interval 516–519 is G4; sequence NKCD. A G5 region spans residues 552–554; it reads SAL.

Belongs to the TRAFAC class translation factor GTPase superfamily. Classic translation factor GTPase family. IF-2 subfamily.

The protein resides in the cytoplasm. Functionally, one of the essential components for the initiation of protein synthesis. Protects formylmethionyl-tRNA from spontaneous hydrolysis and promotes its binding to the 30S ribosomal subunits. Also involved in the hydrolysis of GTP during the formation of the 70S ribosomal complex. The chain is Translation initiation factor IF-2 from Gluconacetobacter diazotrophicus (strain ATCC 49037 / DSM 5601 / CCUG 37298 / CIP 103539 / LMG 7603 / PAl5).